We begin with the raw amino-acid sequence, 330 residues long: Adenylate isopentenyltransferase 5, chloroplastic (330 aa).

The transit peptide at 1–39 (MKPCMTALRQVIQPLSLNFQGNMVDVPFFRRKDKVVFVM) directs the protein to the chloroplast. 40 to 47 (GATGTGKS) contacts ATP.

The protein belongs to the IPP transferase family. In terms of tissue distribution, expressed in root primordia, columella root caps, upper part of young inflorescences, and fruit abscission zones.

The protein resides in the plastid. The protein localises to the chloroplast. It carries out the reaction dimethylallyl diphosphate + ADP = N(6)-(dimethylallyl)adenosine 5'-diphosphate + diphosphate. The enzyme catalyses dimethylallyl diphosphate + ATP = N(6)-(dimethylallyl)adenosine 5'-triphosphate + diphosphate. Involved in cytokinin biosynthesis. Catalyzes the transfer of an isopentenyl group from dimethylallyl diphosphate (DMAPP) to ATP and ADP. The sequence is that of Adenylate isopentenyltransferase 5, chloroplastic (IPT5) from Arabidopsis thaliana (Mouse-ear cress).